A 1280-amino-acid polypeptide reads, in one-letter code: Fibronectin type III domain-containing protein (1280 aa).

The first 19 residues, 1–19 (MWQILLAISIFSLSKLSNA), serve as a signal peptide directing secretion. Residues 20–1156 (QQQPKVAPPQ…RVSTPIYQSA (1137 aa)) lie on the Extracellular side of the membrane. 5 disulfides stabilise this stretch: Cys58–Cys111, Cys268–Cys321, Cys369–Cys417, Cys460–Cys511, and Cys553–Cys604. Fibronectin type-III domains lie at 628 to 722 (PFPP…TGSF), 730 to 824 (PEKW…VKQF), 830 to 933 (PTGK…VAAD), 939 to 1033 (PGPP…TEKT), and 1039 to 1131 (PAKP…PASD). The span at 1118–1130 (YPSQENPQESPAS) shows a compositional bias: polar residues. A disordered region spans residues 1118 to 1144 (YPSQENPQESPASDITEARPRPGISNV). The chain crosses the membrane as a helical span at residues 1157–1177 (WFIALLVLIALLLLVLLTFVL). The Cytoplasmic segment spans residues 1178 to 1280 (YTRHQGAKYL…KDPSSLATFV (103 aa)). The interval 1206-1280 (DEEEGSFSNN…KDPSSLATFV (75 aa)) is disordered. The segment covering 1262 to 1273 (DEKKAPPEEKDP) has biased composition (basic and acidic residues).

In terms of tissue distribution, component of the acid-insoluble organic matrix of the aragonitic skeleton (at protein level).

It localises to the membrane. This chain is Fibronectin type III domain-containing protein, found in Acropora millepora (Staghorn coral).